Reading from the N-terminus, the 779-residue chain is Acyl-homoserine lactone acylase PvdQ (779 aa).

Residues 1–25 (MIISRPLCGFVFAGLSFAVILPAQA) form the signal peptide. The propeptide at 202–223 (SQQVQALQLAAVRNQRFALERG) is spacer peptide. The active-site Nucleophile is the Ser-224. Residues 731–746 (ESSNPQSAHSSDQTEA) are compositionally biased toward polar residues. Residues 731–752 (ESSNPQSAHSSDQTEAFSKKQW) are disordered.

It belongs to the peptidase S45 family. Heterodimer of an alpha subunit and a beta subunit processed from the same precursor.

It localises to the periplasm. It carries out the reaction an N-acyl-L-homoserine lactone + H2O = L-homoserine lactone + a carboxylate. Catalyzes the deacylation of acyl-homoserine lactone (AHL or acyl-HSL), releasing homoserine lactone (HSL) and the corresponding fatty acid. Possesses a specificity for the degradation of long-chain acyl-HSLs (side chains of 11 to 14 carbons in length). The protein is Acyl-homoserine lactone acylase PvdQ (pvdQ) of Pseudomonas savastanoi pv. phaseolicola (strain 1448A / Race 6) (Pseudomonas syringae pv. phaseolicola (strain 1448A / Race 6)).